We begin with the raw amino-acid sequence, 207 residues long: Flavin-dependent thymidylate synthase (207 aa).

The region spanning 1 to 204 is the ThyX domain; sequence MQITLLFHTP…KFIFEHCLHK (204 aa). FAD is bound by residues Ser50 and 74-76; that span reads RHR. Residues 71–74, 84–86, and Lys143 each bind dUMP; these read EVAR and STR. Residues 74 to 84 carry the ThyX motif motif; it reads RHRHTSPSVKS. FAD is bound by residues 159–161 and Asn165; that span reads NAR. A dUMP-binding site is contributed by Arg170. The Involved in ionization of N3 of dUMP, leading to its activation role is filled by Arg170.

This sequence belongs to the thymidylate synthase ThyX family. In terms of assembly, homotetramer. It depends on FAD as a cofactor.

It carries out the reaction dUMP + (6R)-5,10-methylene-5,6,7,8-tetrahydrofolate + NADPH + H(+) = dTMP + (6S)-5,6,7,8-tetrahydrofolate + NADP(+). Its pathway is pyrimidine metabolism; dTTP biosynthesis. Catalyzes the reductive methylation of 2'-deoxyuridine-5'-monophosphate (dUMP) to 2'-deoxythymidine-5'-monophosphate (dTMP) while utilizing 5,10-methylenetetrahydrofolate (mTHF) as the methyl donor, and NADPH and FADH(2) as the reductant. The polypeptide is Flavin-dependent thymidylate synthase (Campylobacter jejuni subsp. jejuni serotype O:2 (strain ATCC 700819 / NCTC 11168)).